We begin with the raw amino-acid sequence, 474 residues long: SHC-transforming protein 3 (474 aa).

Residues 1 to 27 (MSATRKSRAGDEPLPRPPRGAPHTSDQ) form a disordered region. A PID domain is found at 29 to 214 (LGPGVTYVVK…LDEPWTEEEG (186 aa)). The interval 215–378 (DGPDHPYYNS…RMLEELNAEP (164 aa)) is CH1. The residue at position 282 (serine 282) is a Phosphoserine. Residues 308 to 328 (QPVPPQVWPAATSSTESSPRK) form a disordered region. The SH2 domain maps to 379-470 (WYQGEMSRKE…GSELCLQQPV (92 aa)).

Interacts with the Trk receptors in a phosphotyrosine-dependent manner. Once activated, binds to GRB2. Interacts with activated EGF receptors. In terms of processing, tyrosine phosphorylated. In terms of tissue distribution, predominantly expressed in the adult brain.

Signaling adapter that couples activated growth factor receptors to signaling pathway in neurons. Involved in the signal transduction pathways of neurotrophin-activated Trk receptors in cortical neurons. The protein is SHC-transforming protein 3 (Shc3) of Mus musculus (Mouse).